The following is a 406-amino-acid chain: Inner kinetochore subunit OKP1 (406 aa).

2 disordered regions span residues 1 to 37 (MAAD…SDSS) and 59 to 122 (TQSK…TSGE). The span at 8 to 21 (FLQNIENDSINNGQ) shows a compositional bias: polar residues. The segment covering 26 to 37 (SPNRSSSESDSS) has biased composition (low complexity). Residues 69–78 (NSDDAEEGEI) show a composition bias toward acidic residues. At Ser-70 the chain carries Phosphoserine. 2 stretches are compositionally biased toward basic and acidic residues: residues 79-89 (EERTNKEEGQY) and 97-106 (LRFEVGKEST). A compositionally biased stretch (polar residues) spans 107-122 (GKLQSHLSDGSATSGE). Residues 239-285 (SKRQFIQNRYSQELQNNERLEAILSREQNLLEETRKLCMNLKTNNKK) adopt a coiled-coil conformation. Residues 317 to 340 (MHPDGPVTFRNDSHELNLMLNDPI) are CTF19-MCM21 binding motif. Residues 353-400 (VLSLLPSLKEYTKKSKELKETMGQMISDSHEEEIKEVFVPHHESHQDK) are interaction with NKP1-NKP2. Residues 379 to 406 (SDSHEEEIKEVFVPHHESHQDKTEEDIH) form a disordered region. Positions 380-406 (DSHEEEIKEVFVPHHESHQDKTEEDIH) are enriched in basic and acidic residues.

This sequence belongs to the CENP-Q/OKP1 family. In terms of assembly, component of the heterotetrameric kinetochore subcomplex COMA, which consists of AME1, CTF19, MCM21 and OKP1. The COMA subcomplex is part of a larger constitutive centromere-associated network (CCAN) (also known as central kinetochore CTF19 complex in yeast), which is composed of at least AME1, CHL4, CNN1, CTF3, CTF19, IML3, MCM16, MCM21, MCM22, MHF1, MHF2, MIF2, NKP1, NKP2, OKP1 and WIP1. COMA binds the centromeric nucleosome-binding protein MIF2, and to the outer kinetochore MIND subcomplex. OKP1 interacts directly with AME1, with an NKP1-NKP2 dimer, and with CTF19-MCM21.

It localises to the nucleus. It is found in the chromosome. Its subcellular location is the centromere. The protein localises to the kinetochore. Component of the kinetochore, a multiprotein complex that assembles on centromeric DNA and attaches chromosomes to spindle microtubules, mediating chromosome segregation and sister chromatid segregation during meiosis and mitosis. Component of the inner kinetochore COMA complex, which connects centromere-associated proteins and the outer kinetochore. COMA interacts with other inner kinetochore proteins to form the inner kinetochore constitutive centromere-associated network (CCAN), which serves as a structural platform for outer kinetochore assembly. The protein is Inner kinetochore subunit OKP1 of Saccharomyces cerevisiae (strain ATCC 204508 / S288c) (Baker's yeast).